The chain runs to 308 residues: ATP synthase gamma chain (308 aa).

The protein belongs to the ATPase gamma chain family. F-type ATPases have 2 components, CF(1) - the catalytic core - and CF(0) - the membrane proton channel. CF(1) has five subunits: alpha(3), beta(3), gamma(1), delta(1), epsilon(1). CF(0) has three main subunits: a, b and c.

It is found in the cell membrane. In terms of biological role, produces ATP from ADP in the presence of a proton gradient across the membrane. The gamma chain is believed to be important in regulating ATPase activity and the flow of protons through the CF(0) complex. This is ATP synthase gamma chain from Mycobacteroides abscessus (strain ATCC 19977 / DSM 44196 / CCUG 20993 / CIP 104536 / JCM 13569 / NCTC 13031 / TMC 1543 / L948) (Mycobacterium abscessus).